The primary structure comprises 138 residues: Holo-[acyl-carrier-protein] synthase (138 aa).

Asp-8 and Glu-57 together coordinate Mg(2+).

The protein belongs to the P-Pant transferase superfamily. AcpS family. The cofactor is Mg(2+).

The protein localises to the cytoplasm. The enzyme catalyses apo-[ACP] + CoA = holo-[ACP] + adenosine 3',5'-bisphosphate + H(+). In terms of biological role, transfers the 4'-phosphopantetheine moiety from coenzyme A to a Ser of acyl-carrier-protein. The polypeptide is Holo-[acyl-carrier-protein] synthase (Phenylobacterium zucineum (strain HLK1)).